A 120-amino-acid polypeptide reads, in one-letter code: Ig heavy chain V region 36-65 (120 aa).

The Ig-like domain occupies 1-111 (VQLQQSGAEL…GGSYYFDYWG (111 aa)).

This chain is Ig heavy chain V region 36-65, found in Mus musculus (Mouse).